Here is a 785-residue protein sequence, read N- to C-terminus: Formin-like protein 3 (785 aa).

Positions 1 to 20 (MGRLRLAFLAISLVVFVCVS) are cleaved as a signal peptide. A disordered region spans residues 96-145 (YDWLAPASSPNEPPAETPDESSPSPSEETPSVVAPSQSVPGPPRPPPQRE). Over residues 115 to 134 (ESSPSPSEETPSVVAPSQSV) the composition is skewed to low complexity. The helical transmembrane segment at 154–174 (LIIAVASTAVLTFVFVALMFL) threads the bilayer. 3 disordered regions span residues 184–228 (AVGS…KKRS), 241–329 (EFST…APKT), and 730–785 (ETTK…SSPS). Over residues 201-223 (STGSTENSPTVASTSRKMFSVAS) the composition is skewed to polar residues. The span at 256–303 (LKLPPGRSAPPPPPAAAPPPQPPPPPPPKPQPPPPPKIARPPPAPPKG) shows a compositional bias: pro residues. Residues 321 to 747 (DSETGAPKTK…SGKKESEMTT (427 aa)) enclose the FH2 domain. The segment covering 745-754 (MTTSDSNQPS) has biased composition (polar residues). Acidic residues predominate over residues 773–785 (SDDSDDEEDSSPS).

The protein belongs to the formin-like family. Class-I subfamily.

The protein resides in the membrane. Acts as actin nucleation factor that directs the formation of actin cables and polarized growth in pollen tubes. This Arabidopsis thaliana (Mouse-ear cress) protein is Formin-like protein 3 (FH3).